Here is a 64-residue protein sequence, read N- to C-terminus: DNA-directed RNA polymerase subunit Rpo10 (64 aa).

Residues Cys-7, Cys-10, Cys-45, and Cys-46 each contribute to the Zn(2+) site.

It belongs to the archaeal Rpo10/eukaryotic RPB10 RNA polymerase subunit family. As to quaternary structure, part of the RNA polymerase complex. It depends on Zn(2+) as a cofactor.

It localises to the cytoplasm. It catalyses the reaction RNA(n) + a ribonucleoside 5'-triphosphate = RNA(n+1) + diphosphate. Functionally, DNA-dependent RNA polymerase (RNAP) catalyzes the transcription of DNA into RNA using the four ribonucleoside triphosphates as substrates. The sequence is that of DNA-directed RNA polymerase subunit Rpo10 from Haloquadratum walsbyi (strain DSM 16790 / HBSQ001).